The following is a 267-amino-acid chain: Apolipoprotein A-I (267 aa).

The N-terminal stretch at 1–18 is a signal peptide; that stretch reads MKAAVLTLAVLFLTGSQA. Tandem repeats lie at residues 68–89 and 90–111. Residues 68-267 are 10 X approximate tandem repeats; sequence LKLLDNWDSM…EEYTKKLNTQ (200 aa). Methionine 110 is modified (methionine sulfoxide). The 3; half-length repeat unit spans residues 112 to 122; the sequence is KDLEEVKAKVQ. Repeat copies occupy residues 123–144, 145–166, 167–188, 189–210, and 211–232. Residue methionine 136 is modified to Methionine sulfoxide. A 9; half-length repeat occupies 233 to 243; it reads PALEDLRQGLL. Copy 10 of the repeat occupies 244–267; sequence PVLESFKVSFLSALEEYTKKLNTQ.

Belongs to the apolipoprotein A1/A4/E family. As to quaternary structure, homodimer. Interacts with APOA1BP and CLU. Component of a sperm activating protein complex (SPAP), consisting of APOA1, an immunoglobulin heavy chain, an immunoglobulin light chain and albumin. Interacts with NDRG1. Interacts with SCGB3A2. Interacts with NAXE and YJEFN3. Glycosylated. Post-translationally, palmitoylated. As to expression, major protein of plasma HDL, also found in chylomicrons.

The protein localises to the secreted. Its function is as follows. Participates in the reverse transport of cholesterol from tissues to the liver for excretion by promoting cholesterol efflux from tissues and by acting as a cofactor for the lecithin cholesterol acyltransferase (LCAT). As part of the SPAP complex, activates spermatozoa motility. The sequence is that of Apolipoprotein A-I (APOA1) from Pongo abelii (Sumatran orangutan).